We begin with the raw amino-acid sequence, 358 residues long: Methylthioribose-1-phosphate isomerase (358 aa).

Substrate is bound by residues 54-56 (RGA), Arg-96, and Gln-205. Asp-246 functions as the Proton donor in the catalytic mechanism. 256 to 257 (AK) serves as a coordination point for substrate.

This sequence belongs to the eIF-2B alpha/beta/delta subunits family. MtnA subfamily.

The enzyme catalyses 5-(methylsulfanyl)-alpha-D-ribose 1-phosphate = 5-(methylsulfanyl)-D-ribulose 1-phosphate. It functions in the pathway amino-acid biosynthesis; L-methionine biosynthesis via salvage pathway; L-methionine from S-methyl-5-thio-alpha-D-ribose 1-phosphate: step 1/6. In terms of biological role, catalyzes the interconversion of methylthioribose-1-phosphate (MTR-1-P) into methylthioribulose-1-phosphate (MTRu-1-P). In Pseudomonas entomophila (strain L48), this protein is Methylthioribose-1-phosphate isomerase.